Consider the following 1029-residue polypeptide: Translation initiation factor IF-2 (1029 aa).

The tract at residues 73-441 is disordered; the sequence is RELRSEEDDG…RQRRRERKRE (369 aa). Acidic residues-rich tracts occupy residues 106–121 and 148–177; these read TAEE…DEEE and AEAE…DEAE. Residues 183 to 196 show a composition bias toward basic and acidic residues; it reads AADKDAAAIADEQK. 3 stretches are compositionally biased toward acidic residues: residues 213 to 234, 242 to 258, and 279 to 322; these read TGEE…DAEA, TEAE…AEDV, and APDE…DEEG. Residues 358–372 are compositionally biased toward basic and acidic residues; it reads KDKDKDKSSKKDKKD. Residues 373 to 386 are compositionally biased toward basic residues; sequence KSNKKSKSKGKKQK. The span at 400–411 shows a compositional bias: low complexity; sequence QTLQETLQELEQ. The span at 417-427 shows a compositional bias: basic residues; the sequence is RQRRRRRRRKR. Residues 428 to 441 are compositionally biased toward basic and acidic residues; sequence HEEERQRRRERKRE. Residues 524 to 696 form the tr-type G domain; it reads PRAPVVTVMG…LLQSEIMELK (173 aa). Residues 533–540 are G1; sequence GHVDHGKT. GTP is bound at residue 533–540; that stretch reads GHVDHGKT. The G2 stretch occupies residues 558–562; sequence GITQH. Residues 582–585 form a G3 region; that stretch reads DTPG. Residues 582–586 and 636–639 each bind GTP; these read DTPGH and NKMD. Residues 636-639 form a G4 region; the sequence is NKMD. Positions 672–674 are G5; that stretch reads SAK.

It belongs to the TRAFAC class translation factor GTPase superfamily. Classic translation factor GTPase family. IF-2 subfamily.

The protein localises to the cytoplasm. In terms of biological role, one of the essential components for the initiation of protein synthesis. Protects formylmethionyl-tRNA from spontaneous hydrolysis and promotes its binding to the 30S ribosomal subunits. Also involved in the hydrolysis of GTP during the formation of the 70S ribosomal complex. This is Translation initiation factor IF-2 from Salinibacter ruber (strain DSM 13855 / M31).